The sequence spans 698 residues: MVFSYEHYMNLLFHLDNSKETVPPEIAKRIISNAIAPVITVTSTPLFDKHIQETYKVDSLYMLLRFFGGCVSDRDQANEAKVGQHEHEVCDASDSTDSIPKNKNLEVPNLSKKGSRSRSNSLFQRDSTQSQYIRFTRPLGDLIETRDANDMLFNYHSLEVFLDNYLKLVAANTDEMVPHNLLKKSIYHSFFSLAISSTNNLSPYETFNHPILSLIALDISNGEVYEDARDLLVNFKNLNHNTENFPIFMNTNEMLPVFLLCYNDDSQEEFEKCQALAKKLKKQLFVESILLALWKDSFIYDENSVIQLHQPVMSSLEEILFFLQAPTQTTLSLALINSIYDMLDYLVYDLMIPFMKRKVSFWEETILQPRKSLFNGAKFFKKFMNKNPVNGNHQHNSLTRDSQGNEYFASSSSEFLMRKLADWSMMLSDFKTAYSTYESLMDDLDAFPKYLASCIEWCAVSLLMGAQSIVTVKMIKNDINPLIERALATYENCSRIQRGKGKESNSLDVTEPVRSYETRCMILASELFLSLSNTWTSTPYAIQYLETILDECKLGPCSQIMVWERLSDCYNLRVDPRIKHRVGAMKKDAKDTEDLRGEHKYSTDHFTDEDILSEGLTRRRKAAFFRLIAAKKWAEQKQWRQVSWCLKDIESTYSEIKFLHGNGLILSKLKNQLNLKDVDSAPRPSEKNLTRTSVSFIG.

2 disordered regions span residues 82-125 (VGQH…LFQR) and 678-698 (VDSA…SFIG). A compositionally biased stretch (basic and acidic residues) spans 678-689 (VDSAPRPSEKNL).

It belongs to the TRS85 family. In terms of assembly, part of the multisubunit TRAPP (transport protein particle) III complex composed of BET3, BET5, TRS20, TRS23, TRS31, TRS33 and TRS85.

The protein localises to the preautophagosomal structure. In terms of biological role, specific subunit of the TRAPP III complex that acts as an autophagy-specific guanine nucleotide exchange factor (GEF) for YPT1. TRS85 directs the TRAPP III complex to the phagophore assembly site (PAS) that is involved in autophagosome formation. Required for membrane expansion during autophagy and the CVT pathway. Required for sporulation. Has a role late in meiosis following DNA replication. In Saccharomyces cerevisiae (strain ATCC 204508 / S288c) (Baker's yeast), this protein is Trafficking protein particle complex III-specific subunit 85 (TRS85).